Here is a 96-residue protein sequence, read N- to C-terminus: MAIRPLHDRVILKRAEQESKSAGGIVLTGSAAEKSTRGEVIAVGNGRILENGEVKALDVKVGDTVIFNDGYGVKTEKLDGEEVLILSESDILAIVE.

This sequence belongs to the GroES chaperonin family. As to quaternary structure, heptamer of 7 subunits arranged in a ring. Interacts with the chaperonin GroEL.

It is found in the cytoplasm. Functionally, together with the chaperonin GroEL, plays an essential role in assisting protein folding. The GroEL-GroES system forms a nano-cage that allows encapsulation of the non-native substrate proteins and provides a physical environment optimized to promote and accelerate protein folding. GroES binds to the apical surface of the GroEL ring, thereby capping the opening of the GroEL channel. The chain is Co-chaperonin GroES from Alteromonas mediterranea (strain DSM 17117 / CIP 110805 / LMG 28347 / Deep ecotype).